Here is a 961-residue protein sequence, read N- to C-terminus: Endochitinase A (961 aa).

Residues 1-21 form the signal peptide; the sequence is MAPKLFTFVSALSGLASLASA. In terms of domain architecture, GH18 spans 28–339; that stretch reads SNIAVYYGQG…EKIREILYDL (312 aa). Glutamate 175 (proton donor) is an active-site residue. 4 disordered regions span residues 338–720, 767–787, 813–842, and 912–933; these read DLDP…TTTE, TDVP…TADI, PPAT…GEVS, and HVPV…ASPT. A compositionally biased stretch (pro residues) spans 342–355; the sequence is NHPPPTTSPTPTPT. Low complexity-rich tracts occupy residues 356–510, 519–544, 552–604, and 612–635; these read PSTT…STSS, SSTS…PVIS, TSSS…PETT, and TPGS…PATS. A compositionally biased stretch (polar residues) spans 636–665; sequence GGHTETSTVSTSSANQTPSASTSKPLIPTN. The segment covering 666-720 has biased composition (low complexity); sequence SASSTSTGSVTSTPSAPGVPSSSAGSDETATTSTTDSEPTSTSSGSVTAKPTTTE. Glycine 936 carries GPI-anchor amidated glycine lipidation. A propeptide spans 937 to 961 (removed in mature form); sequence AGSRYDVVKGVPALVALALSLLAVL.

It belongs to the glycosyl hydrolase 18 family. Chitinase class III subfamily. O-glycosylated but not N-glycosylated.

It is found in the cell membrane. It localises to the secreted. The protein resides in the cell wall. Its subcellular location is the cell tip. The catalysed reaction is Random endo-hydrolysis of N-acetyl-beta-D-glucosaminide (1-&gt;4)-beta-linkages in chitin and chitodextrins.. Its function is as follows. GPI-anchored chitinase involved in the degradation of chitin, a component of the cell walls of fungi and exoskeletal elements of some animals (including worms and arthropods). Required to reshape the cell wall at the sites where cell wall remodeling and/or cell wall maturation actively take place such as sites of conidia formation. In Emericella nidulans (Aspergillus nidulans), this protein is Endochitinase A (chiA).